A 211-amino-acid polypeptide reads, in one-letter code: N-(5'-phosphoribosyl)anthranilate isomerase (211 aa).

The protein belongs to the TrpF family.

The enzyme catalyses N-(5-phospho-beta-D-ribosyl)anthranilate = 1-(2-carboxyphenylamino)-1-deoxy-D-ribulose 5-phosphate. It functions in the pathway amino-acid biosynthesis; L-tryptophan biosynthesis; L-tryptophan from chorismate: step 3/5. The sequence is that of N-(5'-phosphoribosyl)anthranilate isomerase from Methanococcus maripaludis (strain DSM 14266 / JCM 13030 / NBRC 101832 / S2 / LL).